The chain runs to 446 residues: ATP-dependent protease ATPase subunit HslU (446 aa).

Residues Val18, 60–65 (GVGKTE), Asp259, Glu324, and Arg396 contribute to the ATP site.

The protein belongs to the ClpX chaperone family. HslU subfamily. As to quaternary structure, a double ring-shaped homohexamer of HslV is capped on each side by a ring-shaped HslU homohexamer. The assembly of the HslU/HslV complex is dependent on binding of ATP.

It localises to the cytoplasm. In terms of biological role, ATPase subunit of a proteasome-like degradation complex; this subunit has chaperone activity. The binding of ATP and its subsequent hydrolysis by HslU are essential for unfolding of protein substrates subsequently hydrolyzed by HslV. HslU recognizes the N-terminal part of its protein substrates and unfolds these before they are guided to HslV for hydrolysis. This Acidovorax sp. (strain JS42) protein is ATP-dependent protease ATPase subunit HslU.